A 265-amino-acid chain; its full sequence is MCMVIFAPLFAIFAFATCGGYSGGLRLSVDCVNKTESNLSIDIAFAYPFRLHQVTFEVPTCEGKERQKLALIGDSSSSAEFFVTVAVFAFLYSLAATVVYIFFQNKYRENNRGPLIDFIVTVVFSFLWLVGSSAWAKGLSDVKVATDPKEVLLLMSACKQPSNKCMAIHSPVMSSLNTSVVFGFLNFILWAGNIWFVFKETGWHSSGQRYLSDPMEKHSSSYNQGGYNQDSYGSSSGYSQQASLGPTSDEFGQQPTGPTSFTNQI.

At 1-4 (MCMV) the chain is on the cytoplasmic side. The region spanning 1–202 (MCMVIFAPLF…NIWFVFKETG (202 aa)) is the MARVEL domain. Residues 5–25 (IFAPLFAIFAFATCGGYSGGL) traverse the membrane as a helical segment. Residues 26–81 (RLSVDCVNKTESNLSIDIAFAYPFRLHQVTFEVPTCEGKERQKLALIGDSSSSAEF) lie on the Vesicular side of the membrane. Asn-33 and Asn-38 each carry an N-linked (GlcNAc...) asparagine glycan. Residues 82–102 (FVTVAVFAFLYSLAATVVYIF) traverse the membrane as a helical segment. At 103-114 (FQNKYRENNRGP) the chain is on the cytoplasmic side. The helical transmembrane segment at 115-135 (LIDFIVTVVFSFLWLVGSSAW) threads the bilayer. The Vesicular portion of the chain corresponds to 136–177 (AKGLSDVKVATDPKEVLLLMSACKQPSNKCMAIHSPVMSSLN). A helical membrane pass occupies residues 178–198 (TSVVFGFLNFILWAGNIWFVF). The Cytoplasmic segment spans residues 199 to 265 (KETGWHSSGQ…TGPTSFTNQI (67 aa)). 5 tandem repeats follow at residues 210 to 214 (YLSDP), 222 to 226 (YNQGG), 227 to 231 (YNQDS), 232 to 236 (YGSSS), and 238 to 242 (YSQQA). The tract at residues 210-242 (YLSDPMEKHSSSYNQGGYNQDSYGSSSGYSQQA) is 5 X approximate repeats. The residue at position 212 (Ser-212) is a Phosphoserine. The disordered stretch occupies residues 221 to 265 (SYNQGGYNQDSYGSSSGYSQQASLGPTSDEFGQQPTGPTSFTNQI). A compositionally biased stretch (low complexity) spans 224–243 (QGGYNQDSYGSSSGYSQQAS). Residues 244–265 (LGPTSDEFGQQPTGPTSFTNQI) show a composition bias toward polar residues.

The protein belongs to the synaptophysin/synaptobrevin family.

The protein localises to the cytoplasmic vesicle. Its subcellular location is the secretory vesicle. It is found in the synaptic vesicle membrane. It localises to the synapse. The protein resides in the synaptosome. Functionally, intrinsic membrane protein of small synaptic vesicles. Probable vesicular channel protein. This chain is Synaptoporin (SYNPR), found in Homo sapiens (Human).